The following is a 206-amino-acid chain: Proteasome subunit beta 2 (206 aa).

Positions 1–10 (MLHLKEKLKG) are cleaved as a propeptide — removed in mature form; by autocatalysis. Residue T11 is the Nucleophile of the active site.

The protein belongs to the peptidase T1B family. The 20S proteasome core is composed of 14 alpha and 14 beta subunits that assemble into four stacked heptameric rings, resulting in a barrel-shaped structure. The two inner rings, each composed of seven catalytic beta subunits, are sandwiched by two outer rings, each composed of seven alpha subunits. The catalytic chamber with the active sites is on the inside of the barrel. Has a gated structure, the ends of the cylinder being occluded by the N-termini of the alpha-subunits. Is capped at one or both ends by the proteasome regulatory ATPase, PAN.

The protein localises to the cytoplasm. The catalysed reaction is Cleavage of peptide bonds with very broad specificity.. With respect to regulation, the formation of the proteasomal ATPase PAN-20S proteasome complex, via the docking of the C-termini of PAN into the intersubunit pockets in the alpha-rings, triggers opening of the gate for substrate entry. Interconversion between the open-gate and close-gate conformations leads to a dynamic regulation of the 20S proteasome proteolysis activity. In terms of biological role, component of the proteasome core, a large protease complex with broad specificity involved in protein degradation. This chain is Proteasome subunit beta 2, found in Pyrococcus furiosus (strain ATCC 43587 / DSM 3638 / JCM 8422 / Vc1).